A 381-amino-acid polypeptide reads, in one-letter code: Orotidine 5'-phosphate decarboxylase (381 aa).

Residues Asp42, 64–66 (KTH), 99–108 (DRKFGDIGHT), Tyr333, and Arg352 each bind substrate. Lys101 serves as the catalytic Proton donor. Residues 311–333 (LPPEDEDQQTNGSVGGDGQGQQY) are disordered.

Belongs to the OMP decarboxylase family.

It catalyses the reaction orotidine 5'-phosphate + H(+) = UMP + CO2. It functions in the pathway pyrimidine metabolism; UMP biosynthesis via de novo pathway; UMP from orotate: step 2/2. This is Orotidine 5'-phosphate decarboxylase (ura3) from Hypocrea jecorina (Trichoderma reesei).